The sequence spans 359 residues: Peptide chain release factor 1 (359 aa).

Gln-235 is modified (N5-methylglutamine).

The protein belongs to the prokaryotic/mitochondrial release factor family. In terms of processing, methylated by PrmC. Methylation increases the termination efficiency of RF1.

It localises to the cytoplasm. Its function is as follows. Peptide chain release factor 1 directs the termination of translation in response to the peptide chain termination codons UAG and UAA. The polypeptide is Peptide chain release factor 1 (Ehrlichia ruminantium (strain Gardel)).